Here is a 285-residue protein sequence, read N- to C-terminus: Pantothenate synthetase (285 aa).

30–37 (MGFLHEGH) contributes to the ATP binding site. Catalysis depends on H37, which acts as the Proton donor. Residue Q61 coordinates (R)-pantoate. Q61 contacts beta-alanine. 147-150 (GQKD) provides a ligand contact to ATP. Q153 contacts (R)-pantoate. Residues V176 and 184 to 187 (KSSR) each bind ATP.

This sequence belongs to the pantothenate synthetase family. In terms of assembly, homodimer.

It is found in the cytoplasm. It carries out the reaction (R)-pantoate + beta-alanine + ATP = (R)-pantothenate + AMP + diphosphate + H(+). It participates in cofactor biosynthesis; (R)-pantothenate biosynthesis; (R)-pantothenate from (R)-pantoate and beta-alanine: step 1/1. Its function is as follows. Catalyzes the condensation of pantoate with beta-alanine in an ATP-dependent reaction via a pantoyl-adenylate intermediate. The sequence is that of Pantothenate synthetase from Listeria monocytogenes serotype 4b (strain F2365).